Reading from the N-terminus, the 248-residue chain is PF03932 family protein CutC (248 aa).

The protein belongs to the CutC family. Homodimer.

Its subcellular location is the cytoplasm. The chain is PF03932 family protein CutC from Escherichia coli O139:H28 (strain E24377A / ETEC).